Here is a 201-residue protein sequence, read N- to C-terminus: MSTGSVSDPEDSEMRGLQRVYPAPASKRPPLLRMERGYGSPSDISSAEEEDGEEEPGSLGAAGGCKRKRLRGADAGGAGGRAGGAGKKPLPPKGSAAECKQSQRNAANARERARMRVLSKAFSRLKTSLPWVPPDTKLSKLDTLRLASSYIAHLRQLLQEDRYEDSYVHPVNLTWPFVVSGRPDSDSKDVSAANRLCGTSA.

2 disordered regions span residues 1–108 (MSTG…NAAN) and 182–201 (RPDS…GTSA). A compositionally biased stretch (acidic residues) spans 46–56 (SAEEEDGEEEP). Positions 66-71 (KRKRLR) match the Nuclear localization signal motif. Gly residues predominate over residues 74 to 86 (DAGGAGGRAGGAG). Positions 102–154 (SQRNAANARERARMRVLSKAFSRLKTSLPWVPPDTKLSKLDTLRLASSYIAHL) constitute a bHLH domain.

As to quaternary structure, efficient DNA binding requires dimerization with another bHLH protein. Binds DNA as a homodimer or a heterodimer. Forms a heterodimer with TCF3.

The protein resides in the nucleus. Transcription repressor that blocks myogenesis and activation of E-box dependent muscle genes. The sequence is that of Musculin (Msc) from Mus musculus (Mouse).